Here is a 75-residue protein sequence, read N- to C-terminus: UPF0346 protein LGAS_0911 (75 aa).

It belongs to the UPF0346 family.

The protein is UPF0346 protein LGAS_0911 of Lactobacillus gasseri (strain ATCC 33323 / DSM 20243 / BCRC 14619 / CIP 102991 / JCM 1131 / KCTC 3163 / NCIMB 11718 / NCTC 13722 / AM63).